A 1423-amino-acid polypeptide reads, in one-letter code: Autophagy-related protein 11 (1423 aa).

2 coiled-coil regions span residues 551-589 and 625-978; these read DDELLRSLQDDKSKLESKLKTAESRVRRLEDLLHRQSQA and SEGT…ASEL. Disordered stretches follow at residues 583 to 660 and 1028 to 1048; these read LHRQ…SNRA and RAERAAQNPNDSSDPGTSLRK. Polar residues predominate over residues 585-602; the sequence is RQSQASRPGNLFQPQTNS. A compositionally biased stretch (basic and acidic residues) spans 631–648; that stretch reads LLRRISELENELREEKQR. Polar residues-rich tracts occupy residues 650-660 and 1034-1047; these read SRIQNDLSNRA and QNPNDSSDPGTSLR. A coiled-coil region spans residues 1102–1130; it reads HRIKEVEHKARKWQKEARSYRDRAHIAQK. Residues 1327-1423 form a disordered region; that stretch reads SLRAAAPETP…DYTYESPGKK (97 aa). Residues 1383–1395 show a composition bias toward basic and acidic residues; sequence KTAEPRRMLDRQE.

This sequence belongs to the ATG11 family. In terms of assembly, homodimer and potential homooligomers. Interacts with ATG1 kinase and the ATG19 and ATG34 cargo protein transporters. Interacts with ATG9, ATG17 and ATG20.

The protein localises to the preautophagosomal structure membrane. The protein resides in the vacuole membrane. Involved in cytoplasm to vacuole transport (Cvt), pexophagy, mitophagy and nucleophagy. Recruits mitochondria for their selective degradation via autophagy (mitophagy) during starvation, through its interaction with ATG32. Works as scaffold proteins that recruit ATG proteins to the pre-autophagosome (PAS), the site of vesicle/autophagosome formation. Required for ATG9 anterograde transport from the mitochondria to the PAS. Also recruits the ATG19-prAPE1 complex to the PAS. Required for the Cvt vesicles completion. Plays a role in morphological differentiation and cephalosporin production. The protein is Autophagy-related protein 11 of Hapsidospora chrysogena (Acremonium chrysogenum).